The following is a 560-amino-acid chain: DNA ligase B (560 aa).

Lysine 124 (N6-AMP-lysine intermediate) is an active-site residue.

The protein belongs to the NAD-dependent DNA ligase family. LigB subfamily.

The catalysed reaction is NAD(+) + (deoxyribonucleotide)n-3'-hydroxyl + 5'-phospho-(deoxyribonucleotide)m = (deoxyribonucleotide)n+m + AMP + beta-nicotinamide D-nucleotide.. Functionally, catalyzes the formation of phosphodiester linkages between 5'-phosphoryl and 3'-hydroxyl groups in double-stranded DNA using NAD as a coenzyme and as the energy source for the reaction. In Shigella flexneri serotype 5b (strain 8401), this protein is DNA ligase B.